Reading from the N-terminus, the 234-residue chain is LexA repressor (234 aa).

Positions 41–61 (RAEIANELGFKSANAAEEHLQ) form a DNA-binding region, H-T-H motif. Residues Ser152 and Lys189 each act as for autocatalytic cleavage activity in the active site.

This sequence belongs to the peptidase S24 family. As to quaternary structure, homodimer.

The catalysed reaction is Hydrolysis of Ala-|-Gly bond in repressor LexA.. Its function is as follows. Represses a number of genes involved in the response to DNA damage (SOS response), including recA and lexA. In the presence of single-stranded DNA, RecA interacts with LexA causing an autocatalytic cleavage which disrupts the DNA-binding part of LexA, leading to derepression of the SOS regulon and eventually DNA repair. The chain is LexA repressor from Polaromonas sp. (strain JS666 / ATCC BAA-500).